A 35-amino-acid chain; its full sequence is Probable endonuclease 4 (35 aa).

Zn(2+) is bound at residue glutamate 15.

It belongs to the AP endonuclease 2 family. Requires Zn(2+) as cofactor.

It carries out the reaction Endonucleolytic cleavage to 5'-phosphooligonucleotide end-products.. Functionally, endonuclease IV plays a role in DNA repair. It cleaves phosphodiester bonds at apurinic or apyrimidinic (AP) sites, generating a 3'-hydroxyl group and a 5'-terminal sugar phosphate. The chain is Probable endonuclease 4 (nfo) from Yersinia enterocolitica.